The primary structure comprises 813 residues: Phosphate transporter PHO1 homolog 3 (813 aa).

Residues 1–359 (MKFGKEFSSQ…SRDATKPYMK (359 aa)) form the SPX domain. Topologically, residues 1–411 (MKFGKEFSSQ…KAKRERHRIT (411 aa)) are cytoplasmic. The segment at 214–266 (EHMEAIQEGGSSRAGLMEDDEEDEDEQNETSVVSTGAIDNETTTSRMRGARPS) is disordered. Residues 230-241 (MEDDEEDEDEQN) show a composition bias toward acidic residues. The helical transmembrane segment at 412–432 (FSTGFSAGCVFSLIVALVAII) threads the bilayer. Over 433 to 450 (RTRNLLEMEGQKEYMNTM) the chain is Extracellular. Residues 451–471 (FPLYSLFGFIVLHIIVYAANI) traverse the membrane as a helical segment. Residues 472–496 (YYWRRYRVNYSFIFGFKQGTELGYR) lie on the Cytoplasmic side of the membrane. The helical transmembrane segment at 497–517 (QVLLVGFSIGVLALLCVLANL) threads the bilayer. Residues 518-533 (DMEADPKTKAYQARTE) are Extracellular-facing. The chain crosses the membrane as a helical span at residues 534–554 (ILPLILLAAMFIVLVLPFNYF). The Cytoplasmic segment spans residues 555–684 (YRSSRFFFLT…SIQKGQVAWR (130 aa)). The region spanning 618–813 (KESDVYNTFF…NYDEDDDKDN (196 aa)) is the EXS domain. A helical transmembrane segment spans residues 685 to 705 (VLAAVFSFIAAIFCTYWDFVH). Residues 706-729 (DWGLLNRTSKNRWLRDKLLVPQKK) lie on the Extracellular side of the membrane. The chain crosses the membrane as a helical span at residues 730 to 750 (VYFIAMVLNVLLRFAWIQTVL). Over 751–813 (DFNFSFMHRQ…NYDEDDDKDN (63 aa)) the chain is Cytoplasmic.

The protein belongs to the SYG1 (TC 2.A.94) family. As to expression, expressed in vascular cylinder of roots, leaves and filaments. Expressed in receptacle and stigma apex.

Its subcellular location is the cell membrane. In terms of biological role, may transport inorganic phosphate (Pi). In Arabidopsis thaliana (Mouse-ear cress), this protein is Phosphate transporter PHO1 homolog 3 (PHO1;H3).